Here is a 493-residue protein sequence, read N- to C-terminus: 3-octaprenyl-4-hydroxybenzoate carboxy-lyase (493 aa).

Asparagine 172 contacts Mn(2+). Prenylated FMN is bound by residues 175 to 177 (IYR), 189 to 191 (RWL), and 194 to 195 (RG). Glutamate 238 provides a ligand contact to Mn(2+). The Proton donor role is filled by aspartate 287.

The protein belongs to the UbiD family. In terms of assembly, homohexamer. The cofactor is prenylated FMN. Requires Mn(2+) as cofactor.

The protein localises to the cell membrane. The enzyme catalyses a 4-hydroxy-3-(all-trans-polyprenyl)benzoate + H(+) = a 2-(all-trans-polyprenyl)phenol + CO2. It participates in cofactor biosynthesis; ubiquinone biosynthesis. In terms of biological role, catalyzes the decarboxylation of 3-octaprenyl-4-hydroxy benzoate to 2-octaprenylphenol, an intermediate step in ubiquinone biosynthesis. The chain is 3-octaprenyl-4-hydroxybenzoate carboxy-lyase from Shewanella denitrificans (strain OS217 / ATCC BAA-1090 / DSM 15013).